Here is a 307-residue protein sequence, read N- to C-terminus: Aspartate carbamoyltransferase catalytic subunit (307 aa).

Positions 54 and 55 each coordinate carbamoyl phosphate. K83 lines the L-aspartate pocket. Residues R104, H132, and Q135 each contribute to the carbamoyl phosphate site. 2 residues coordinate L-aspartate: R165 and R228. The carbamoyl phosphate site is built by L267 and P268.

Belongs to the aspartate/ornithine carbamoyltransferase superfamily. ATCase family. As to quaternary structure, heterododecamer (2C3:3R2) of six catalytic PyrB chains organized as two trimers (C3), and six regulatory PyrI chains organized as three dimers (R2).

The catalysed reaction is carbamoyl phosphate + L-aspartate = N-carbamoyl-L-aspartate + phosphate + H(+). It participates in pyrimidine metabolism; UMP biosynthesis via de novo pathway; (S)-dihydroorotate from bicarbonate: step 2/3. Catalyzes the condensation of carbamoyl phosphate and aspartate to form carbamoyl aspartate and inorganic phosphate, the committed step in the de novo pyrimidine nucleotide biosynthesis pathway. In Clostridium botulinum (strain Loch Maree / Type A3), this protein is Aspartate carbamoyltransferase catalytic subunit.